A 323-amino-acid polypeptide reads, in one-letter code: Solute carrier family 35 member B1 (323 aa).

The next 8 helical transmembrane spans lie at 15–35 (LVCF…QETI), 51–71 (FALS…KLLI), 85–105 (WLYA…NSAL), 136–156 (YPLS…LFMY), 169–189 (TFGY…LTGV), 205–225 (MMLY…VFTG), 253–273 (LGQT…CSII), and 286–306 (VILF…LVFL). The short motif at 319–323 (KKPSH) is the Di-lysine motif element.

It belongs to the nucleotide-sugar transporter family. SLC35B subfamily.

The protein resides in the endoplasmic reticulum membrane. In terms of biological role, probable sugar transporter. This Xenopus tropicalis (Western clawed frog) protein is Solute carrier family 35 member B1 (slc35b1).